A 445-amino-acid polypeptide reads, in one-letter code: C-type lectin domain family 4 member M (445 aa).

Residues 1-49 (MSDSKEPRVQQLGLLEEDPTTSGIRLFPRDFQFQQIHGHKSSTGCLGHG) are Cytoplasmic-facing. The Endocytosis signal motif lies at 14-15 (LL). A helical; Signal-anchor for type II membrane protein membrane pass occupies residues 50 to 70 (PLVLQLLSFTLLAGVLVAILV). Residues 71 to 445 (QVSKVPSSLS…KKPAVCFRDE (375 aa)) lie on the Extracellular side of the membrane. Asparagine 92 carries N-linked (GlcNAc...) asparagine glycosylation. 9 tandem repeats follow at residues 108–130 (KLQE…PEKS), 131–151 (KLQE…ELPE), 154–176 (KLQE…PEKS), 177–199 (KLQE…PEKS), 200–222 (KLQE…PEKS), 223–245 (KLQE…PEKS), 246–268 (KLQE…PEKS), 269–291 (ELQE…PDQS), and 292–314 (KQQQ…CRHC). The 9 X approximate tandem repeats stretch occupies residues 108 to 315 (KLQEIYQELT…AFERLCRHCP (208 aa)). 4 disulfides stabilise this stretch: cysteine 311-cysteine 441, cysteine 314-cysteine 325, cysteine 342-cysteine 435, and cysteine 414-cysteine 427. The C-type lectin domain occupies 320–436 (FFQGNCYFMS…CDIDNYWICK (117 aa)). Positions 405, 407, 409, 412, 423, and 424 each coordinate Ca(2+). N-linked (GlcNAc...) asparagine glycosylation occurs at asparagine 407.

As to quaternary structure, homotetramer.

The protein localises to the membrane. Functionally, probable pathogen-recognition receptor involved in peripheral immune surveillance in liver. May mediate the endocytosis of pathogens which are subsequently degraded in lysosomal compartments. Probably recognizes in a calcium-dependent manner high mannose N-linked oligosaccharides in a variety of pathogen antigens. Is a receptor for ICAM3, probably by binding to mannose-like carbohydrates. The chain is C-type lectin domain family 4 member M (CLEC4M) from Pan troglodytes (Chimpanzee).